Reading from the N-terminus, the 279-residue chain is Protein CMSS1 (279 aa).

Over residues 1–10 (MADDLGDEWW) the composition is skewed to acidic residues. The segment at 1–89 (MADDLGDEWW…DVLAKSEPKP (89 aa)) is disordered. Over residues 12–22 (NQPTGAGSSPE) the composition is skewed to polar residues. Serine 19 and serine 24 each carry phosphoserine. The residue at position 167 (arginine 167) is an Omega-N-methylarginine. The residue at position 212 (threonine 212) is a Phosphothreonine.

This sequence belongs to the CMS1 family.

This chain is Protein CMSS1 (CMSS1), found in Homo sapiens (Human).